The following is a 101-amino-acid chain: ATP synthase subunit c (101 aa).

2 consecutive transmembrane segments (helical) span residues 35-55 (IGAG…GLIG) and 81-101 (GISE…IFVV).

This sequence belongs to the ATPase C chain family. In terms of assembly, F-type ATPases have 2 components, F(1) - the catalytic core - and F(0) - the membrane proton channel. F(1) has five subunits: alpha(3), beta(3), gamma(1), delta(1), epsilon(1). F(0) has three main subunits: a(1), b(2) and c(10-14). The alpha and beta chains form an alternating ring which encloses part of the gamma chain. F(1) is attached to F(0) by a central stalk formed by the gamma and epsilon chains, while a peripheral stalk is formed by the delta and b chains.

It is found in the cell membrane. In terms of biological role, f(1)F(0) ATP synthase produces ATP from ADP in the presence of a proton or sodium gradient. F-type ATPases consist of two structural domains, F(1) containing the extramembraneous catalytic core and F(0) containing the membrane proton channel, linked together by a central stalk and a peripheral stalk. During catalysis, ATP synthesis in the catalytic domain of F(1) is coupled via a rotary mechanism of the central stalk subunits to proton translocation. Its function is as follows. Key component of the F(0) channel; it plays a direct role in translocation across the membrane. A homomeric c-ring of between 10-14 subunits forms the central stalk rotor element with the F(1) delta and epsilon subunits. This is ATP synthase subunit c from Mycoplasma capricolum subsp. capricolum (strain California kid / ATCC 27343 / NCTC 10154).